A 126-amino-acid chain; its full sequence is Aspartate 1-decarboxylase (126 aa).

Serine 25 serves as the catalytic Schiff-base intermediate with substrate; via pyruvic acid. Serine 25 carries the pyruvic acid (Ser) modification. Residue threonine 57 participates in substrate binding. Tyrosine 58 serves as the catalytic Proton donor. 73-75 (GAA) contributes to the substrate binding site.

This sequence belongs to the PanD family. Heterooctamer of four alpha and four beta subunits. The cofactor is pyruvate. In terms of processing, is synthesized initially as an inactive proenzyme, which is activated by self-cleavage at a specific serine bond to produce a beta-subunit with a hydroxyl group at its C-terminus and an alpha-subunit with a pyruvoyl group at its N-terminus.

It is found in the cytoplasm. The catalysed reaction is L-aspartate + H(+) = beta-alanine + CO2. It participates in cofactor biosynthesis; (R)-pantothenate biosynthesis; beta-alanine from L-aspartate: step 1/1. Its function is as follows. Catalyzes the pyruvoyl-dependent decarboxylation of aspartate to produce beta-alanine. This Cronobacter sakazakii (strain ATCC BAA-894) (Enterobacter sakazakii) protein is Aspartate 1-decarboxylase.